Consider the following 474-residue polypeptide: MDRKKKPLDVTASSLVDLKAELFRKQEEFKQEKLLKDSGVFGKPKTSNKKPSIWSKQNAGVSSRAEKDAEQKLEEQKTLDKSREKLEEKAKLYEKMTKGDFLDEEVEDMYLVDFTQKIIDKRKEMEVLGATRDSRIKEERDAAVAAANDDDDEEEFSEKDIPPPQDPSEEWVDYVDSLGRSRRCMRKDLPSLLEMDKNLQGRLFVSPANEKTLLSEDMRKELQRQQWEEEEREALKKPMGPIHYEDIRENEARQLGVGYFAFARDKELRNKQMKTLEMLREQTTDQRIKRENIKEKRKAILEARLAKLRQKKMKKSKVDGTEEESRADGVVTEPSEPKSVPAPPPVAQSSKVEVIIQERKDSKPGVPHIREWDRGKDFSFGFWSKKQSELRAERDPEFAPPSNYFVGQKRTGSLSSQPWSRPGAAPSDLGHSSGQSQEPSSSHTSTPASESSPQAPTVTFQTLDDMISYYKQVT.

2 disordered regions span residues 39–86 (GVFG…REKL) and 129–170 (GATR…PSEE). 2 stretches are compositionally biased toward basic and acidic residues: residues 64 to 86 (RAEK…REKL) and 129 to 142 (GATR…ERDA). A coiled-coil region spans residues 64 to 98 (RAEKDAEQKLEEQKTLDKSREKLEEKAKLYEKMTK). A compositionally biased stretch (acidic residues) spans 148–157 (NDDDDEEEFS). Phosphoserine is present on Ser206. Residues 276-317 (LEMLREQTTDQRIKRENIKEKRKAILEARLAKLRQKKMKKSK) are a coiled coil. 2 disordered regions span residues 309-372 (RQKK…IREW) and 389-461 (ELRA…VTFQ). 2 stretches are compositionally biased toward basic and acidic residues: residues 316–327 (SKVDGTEEESRA) and 356–372 (IQER…IREW). A compositionally biased stretch (polar residues) spans 410–419 (RTGSLSSQPW). Residues 430-453 (GHSSGQSQEPSSSHTSTPASESSP) are compositionally biased toward low complexity.

It is found in the nucleus. Probably involved in neuronal development. In Rattus norvegicus (Rat), this protein is Coiled-coil domain-containing protein 174 (Ccdc174).